Reading from the N-terminus, the 240-residue chain is Adapter protein MecA (240 aa).

A compositionally biased stretch (basic and acidic residues) spans 119-132 (QRKQQKKNHQDKQQ). A disordered region spans residues 119–138 (QRKQQKKNHQDKQQRRAHKP).

This sequence belongs to the MecA family. In terms of assembly, homodimer.

In terms of biological role, enables the recognition and targeting of unfolded and aggregated proteins to the ClpC protease or to other proteins involved in proteolysis. The polypeptide is Adapter protein MecA (Staphylococcus epidermidis (strain ATCC 35984 / DSM 28319 / BCRC 17069 / CCUG 31568 / BM 3577 / RP62A)).